The following is a 296-amino-acid chain: uncharacterized protein (296 aa).

An N-terminal signal peptide occupies residues Met-1–Ala-20.

This is an uncharacterized protein from Rickettsia felis (strain ATCC VR-1525 / URRWXCal2) (Rickettsia azadi).